The primary structure comprises 219 residues: Glutathione S-transferase F13 (219 aa).

A GST N-terminal domain is found at 2–82 (AMKLYGDEMS…YIAEKHRDKG (81 aa)). Glutathione is bound by residues 11–12 (SA), 40–41 (HK), 53–54 (KV), and 66–67 (ES). The GST C-terminal domain maps to 90–217 (DPKEAAIVKL…VSPGLTVAPT (128 aa)).

The protein belongs to the GST superfamily. Phi family.

Its subcellular location is the cytoplasm. The protein localises to the cytosol. The catalysed reaction is RX + glutathione = an S-substituted glutathione + a halide anion + H(+). Functionally, may be involved in the conjugation of reduced glutathione to a wide number of exogenous and endogenous hydrophobic electrophiles and have a detoxification role against certain herbicides. The chain is Glutathione S-transferase F13 (GSTF13) from Arabidopsis thaliana (Mouse-ear cress).